The following is a 337-amino-acid chain: Phospholipase A1 1 (337 aa).

The first 21 residues, 1-21 (MNFKYSILFICFVKVLDNCYA), serve as a signal peptide directing secretion. The propeptide occupies 22 to 35 (ADDLTTLRNGTLDR). C41 and C124 form a disulfide bridge. Residue S174 is the Nucleophile of the active site. D202 acts as the Charge relay system in catalysis. Intrachain disulfides connect C213–C218 and C256–C261. H263 functions as the Charge relay system in the catalytic mechanism. Disulfide bonds link C278–C305, C279–C330, and C298–C303.

This sequence belongs to the AB hydrolase superfamily. Lipase family. Expressed by the venom gland.

It localises to the secreted. It catalyses the reaction a 1,2-diacyl-sn-glycero-3-phosphocholine + H2O = a 2-acyl-sn-glycero-3-phosphocholine + a fatty acid + H(+). Functionally, catalyzes the hydrolysis of phosphatidylcholine with phospholipase A1 activity. May act as an allergen and induce hemolytic activity. The chain is Phospholipase A1 1 from Polistes dominula (European paper wasp).